Here is a 354-residue protein sequence, read N- to C-terminus: tRNA-specific 2-thiouridylase MnmA (354 aa).

ATP is bound by residues 6-13 and L33; that span reads LLSGGVDS. C100 (nucleophile) is an active-site residue. Cysteines 100 and 195 form a disulfide. G123 lines the ATP pocket. Positions 145–147 are interaction with tRNA; it reads KDQ. Residue C195 is the Cysteine persulfide intermediate of the active site.

Belongs to the MnmA/TRMU family.

The protein localises to the cytoplasm. It catalyses the reaction S-sulfanyl-L-cysteinyl-[protein] + uridine(34) in tRNA + AH2 + ATP = 2-thiouridine(34) in tRNA + L-cysteinyl-[protein] + A + AMP + diphosphate + H(+). In terms of biological role, catalyzes the 2-thiolation of uridine at the wobble position (U34) of tRNA, leading to the formation of s(2)U34. This Borrelia hermsii (strain HS1 / DAH) protein is tRNA-specific 2-thiouridylase MnmA.